Reading from the N-terminus, the 658-residue chain is Glycogen debranching enzyme (658 aa).

Asp336 (nucleophile) is an active-site residue. Residue Glu371 is the Proton donor of the active site. The tract at residues 459–484 (EANGEENRDGTNSNYSDNHGKEGLGG) is disordered.

The protein belongs to the glycosyl hydrolase 13 family.

It catalyses the reaction Hydrolysis of (1-&gt;6)-alpha-D-glucosidic linkages to branches with degrees of polymerization of three or four glucose residues in limit dextrin.. Its pathway is glycan degradation; glycogen degradation. Its function is as follows. Removes maltotriose and maltotetraose chains that are attached by 1,6-alpha-linkage to the limit dextrin main chain, generating a debranched limit dextrin. The sequence is that of Glycogen debranching enzyme from Salmonella enteritidis PT4 (strain P125109).